Here is a 129-residue protein sequence, read N- to C-terminus: Small ribosomal subunit protein uS11 (129 aa).

This sequence belongs to the universal ribosomal protein uS11 family. In terms of assembly, part of the 30S ribosomal subunit. Interacts with proteins S7 and S18. Binds to IF-3.

Functionally, located on the platform of the 30S subunit, it bridges several disparate RNA helices of the 16S rRNA. Forms part of the Shine-Dalgarno cleft in the 70S ribosome. This chain is Small ribosomal subunit protein uS11, found in Lysinibacillus sphaericus (strain C3-41).